Here is a 443-residue protein sequence, read N- to C-terminus: 5-methylthioadenosine/S-adenosylhomocysteine deaminase (443 aa).

Residues H74 and H76 each coordinate Zn(2+). Positions 103 and 196 each coordinate substrate. H223 is a binding site for Zn(2+). 2 residues coordinate substrate: E226 and D311. Zn(2+) is bound at residue D311.

Belongs to the metallo-dependent hydrolases superfamily. MTA/SAH deaminase family. The cofactor is Zn(2+).

It carries out the reaction S-adenosyl-L-homocysteine + H2O + H(+) = S-inosyl-L-homocysteine + NH4(+). The enzyme catalyses S-methyl-5'-thioadenosine + H2O + H(+) = S-methyl-5'-thioinosine + NH4(+). Its function is as follows. Catalyzes the deamination of 5-methylthioadenosine and S-adenosyl-L-homocysteine into 5-methylthioinosine and S-inosyl-L-homocysteine, respectively. Is also able to deaminate adenosine. The protein is 5-methylthioadenosine/S-adenosylhomocysteine deaminase of Haloquadratum walsbyi (strain DSM 16790 / HBSQ001).